Here is a 426-residue protein sequence, read N- to C-terminus: Serine--tRNA ligase (426 aa).

232–234 (TAE) provides a ligand contact to L-serine. An ATP-binding site is contributed by 263 to 265 (RRE). E286 serves as a coordination point for L-serine. 350–353 (EISS) serves as a coordination point for ATP. S385 contacts L-serine.

It belongs to the class-II aminoacyl-tRNA synthetase family. Type-1 seryl-tRNA synthetase subfamily. As to quaternary structure, homodimer. The tRNA molecule binds across the dimer.

It is found in the cytoplasm. The enzyme catalyses tRNA(Ser) + L-serine + ATP = L-seryl-tRNA(Ser) + AMP + diphosphate + H(+). It catalyses the reaction tRNA(Sec) + L-serine + ATP = L-seryl-tRNA(Sec) + AMP + diphosphate + H(+). The protein operates within aminoacyl-tRNA biosynthesis; selenocysteinyl-tRNA(Sec) biosynthesis; L-seryl-tRNA(Sec) from L-serine and tRNA(Sec): step 1/1. In terms of biological role, catalyzes the attachment of serine to tRNA(Ser). Is also able to aminoacylate tRNA(Sec) with serine, to form the misacylated tRNA L-seryl-tRNA(Sec), which will be further converted into selenocysteinyl-tRNA(Sec). This chain is Serine--tRNA ligase, found in Fervidobacterium nodosum (strain ATCC 35602 / DSM 5306 / Rt17-B1).